Here is a 451-residue protein sequence, read N- to C-terminus: AAA-ATPase At3g28570, mitochondrial (451 aa).

Residues 1–48 constitute a mitochondrion transit peptide; that stretch reads MFAENLTRIGSNVAGLFFVWSTLKRYFPRQIQQLLFNAIQRIPIFKRL. 243–250 provides a ligand contact to ATP; it reads GPPGTGKS.

The protein belongs to the AAA ATPase family. BCS1 subfamily. Mg(2+) is required as a cofactor.

It is found in the mitochondrion. The enzyme catalyses ATP + H2O = ADP + phosphate + H(+). This is AAA-ATPase At3g28570, mitochondrial from Arabidopsis thaliana (Mouse-ear cress).